The sequence spans 134 residues: Ribonuclease VapC40 (134 aa).

The 124-residue stretch at 3 to 126 (APDTSVLVAG…LRAVETYERL (124 aa)) folds into the PINc domain. Residues aspartate 5 and aspartate 98 each contribute to the Mg(2+) site.

The protein belongs to the PINc/VapC protein family. Mg(2+) is required as a cofactor.

Functionally, toxic component of a type II toxin-antitoxin (TA) system. An RNase. Its cognate antitoxin is VapB40. The protein is Ribonuclease VapC40 of Mycobacterium tuberculosis (strain CDC 1551 / Oshkosh).